The primary structure comprises 208 residues: Large ribosomal subunit protein eL13 (208 aa).

2 positions are modified to phosphoserine: S177 and S180.

The protein belongs to the eukaryotic ribosomal protein eL13 family. In terms of assembly, component of the large ribosomal subunit (LSU). Mature yeast ribosomes consist of a small (40S) and a large (60S) subunit. The 40S small subunit contains 1 molecule of ribosomal RNA (18S rRNA) and at least 33 different proteins. The large 60S subunit contains 3 rRNA molecules (25S, 5.8S and 5S rRNA) and at least 46 different proteins.

It localises to the cytoplasm. Component of the ribosome, a large ribonucleoprotein complex responsible for the synthesis of proteins in the cell. The small ribosomal subunit (SSU) binds messenger RNAs (mRNAs) and translates the encoded message by selecting cognate aminoacyl-transfer RNA (tRNA) molecules. The large subunit (LSU) contains the ribosomal catalytic site termed the peptidyl transferase center (PTC), which catalyzes the formation of peptide bonds, thereby polymerizing the amino acids delivered by tRNAs into a polypeptide chain. The nascent polypeptides leave the ribosome through a tunnel in the LSU and interact with protein factors that function in enzymatic processing, targeting, and the membrane insertion of nascent chains at the exit of the ribosomal tunnel. This is Large ribosomal subunit protein eL13 (rpl13) from Schizosaccharomyces pombe (strain 972 / ATCC 24843) (Fission yeast).